Consider the following 215-residue polypeptide: FGFR1 oncogene partner 2 homolog (215 aa).

Residues 12-186 (AKELVERLRE…REILQITKIS (175 aa)) adopt a coiled-coil conformation. The tract at residues 193–215 (EDASENSPHSAPVPNTDLILRKS) is disordered.

It belongs to the SIKE family.

The protein resides in the cytoplasm. The chain is FGFR1 oncogene partner 2 homolog (fgfr1op2) from Xenopus laevis (African clawed frog).